A 194-amino-acid chain; its full sequence is Adenylate kinase (194 aa).

An ATP-binding site is contributed by 10–15 (GAGKGT). The tract at residues 30–59 (STGDMLRAAVAQQSEIGKRAKAVMDAGQLV) is NMP. Residues T31, R36, 57–59 (QLV), 85–88 (GYPR), and Q92 contribute to the AMP site. An LID region spans residues 126 to 142 (SRVAETIAKGGQVRSDD). An ATP-binding site is contributed by R127. Residues R139 and R150 each coordinate AMP. A178 provides a ligand contact to ATP.

The protein belongs to the adenylate kinase family. As to quaternary structure, monomer.

It is found in the cytoplasm. The catalysed reaction is AMP + ATP = 2 ADP. The protein operates within purine metabolism; AMP biosynthesis via salvage pathway; AMP from ADP: step 1/1. In terms of biological role, catalyzes the reversible transfer of the terminal phosphate group between ATP and AMP. Plays an important role in cellular energy homeostasis and in adenine nucleotide metabolism. This chain is Adenylate kinase, found in Brucella canis (strain ATCC 23365 / NCTC 10854 / RM-666).